A 376-amino-acid chain; its full sequence is Glucose-1-phosphate adenylyltransferase (376 aa).

Residues tyrosine 101, glycine 166, 181–182 (EK), and serine 192 each bind alpha-D-glucose 1-phosphate.

The protein belongs to the bacterial/plant glucose-1-phosphate adenylyltransferase family. As to quaternary structure, homotetramer.

It carries out the reaction alpha-D-glucose 1-phosphate + ATP + H(+) = ADP-alpha-D-glucose + diphosphate. It participates in glycan biosynthesis; glycogen biosynthesis. In terms of biological role, involved in the biosynthesis of ADP-glucose, a building block required for the elongation reactions to produce glycogen. Catalyzes the reaction between ATP and alpha-D-glucose 1-phosphate (G1P) to produce pyrophosphate and ADP-Glc. The polypeptide is Glucose-1-phosphate adenylyltransferase (Bacillus cereus (strain Q1)).